Reading from the N-terminus, the 396-residue chain is Probable isocitrate dehydrogenase [NAD] gamma 2, mitochondrial (396 aa).

A mitochondrion-targeting transit peptide spans 1-25 (MLAVTSCSMKTVLQYAVFLGHSREV). Thr-117 is a binding site for citrate. 3 residues coordinate substrate: Arg-133, Arg-164, and Asp-251. Asp-251 provides a ligand contact to Mn(2+). Asn-321 is an ADP binding site.

It belongs to the isocitrate and isopropylmalate dehydrogenases family. As to quaternary structure, heterooligomer of subunits alpha (IDH3A), beta (IDH3B), and gamma (IDH3G) in the apparent ratio of 2:1:1. The heterodimer containing one IDH3A and one IDH3B subunit and the heterodimer containing one IDH3A and one IDH3G subunit assemble into a heterotetramer (which contains two subunits of IDH3A, one of IDH3B and one of IDH3G) and further into the heterooctamer. Mg(2+) serves as cofactor. Requires Mn(2+) as cofactor.

Its subcellular location is the mitochondrion. Its activity is regulated as follows. The heterotetramer and the heterodimer composed of IDH3A and IDH3G subunits can be allosterically activated by citrate (CIT) or/and ADP, and the two activators can act independently or synergistically. The heterodimer composed of IDH3A and IDH3B subunits cannot be allosterically regulated and the allosteric regulation of the heterotetramer is through the IDH3G subunit and not the IDH3B subunit. The IDH3G subunit contains the allosteric site which consists of a CIT-binding site and an ADP-binding site, and the binding of CIT and ADP causes conformational changes at the allosteric site which are transmitted to the active site in the catalytic subunit (IDH3A) through a cascade of conformational changes at the heterodimer interface, leading to stabilization of the isocitrate-binding at the active site and thus activation of the enzyme. ATP can activate the heterotetramer and the heterodimer composed of IDH3A and IDH3G subunits at low concentrations but inhibits their activities at high concentrations, whereas ATP exhibits only inhibitory effect on the heterodimer composed of IDH3A and IDH3B subunits. In terms of biological role, regulatory subunit which plays a role in the allosteric regulation of the enzyme catalyzing the decarboxylation of isocitrate (ICT) into alpha-ketoglutarate. The heterodimer composed of the alpha (IDH3A) and beta (IDH3B) subunits and the heterodimer composed of the alpha (IDH3A) and gamma (IDH3G) subunits, have considerable basal activity but the full activity of the heterotetramer (containing two subunits of IDH3A, one of IDH3B and one of IDH3G) requires the assembly and cooperative function of both heterodimers. This Mus musculus (Mouse) protein is Probable isocitrate dehydrogenase [NAD] gamma 2, mitochondrial.